The following is a 393-amino-acid chain: Protein TsgA (393 aa).

The next 12 helical transmembrane spans lie at Trp-11 to Met-31, Phe-51 to Pro-71, Phe-78 to Leu-98, Ala-101 to Ile-121, Leu-134 to Phe-154, Trp-162 to Gly-182, Ile-206 to Ile-226, Ala-245 to Leu-265, Ile-273 to Gln-293, Trp-298 to Gly-318, Phe-332 to Val-352, and Leu-361 to Val-381.

It belongs to the major facilitator superfamily. TsgA family.

The protein resides in the cell inner membrane. In Salmonella gallinarum (strain 287/91 / NCTC 13346), this protein is Protein TsgA.